We begin with the raw amino-acid sequence, 159 residues long: SsrA-binding protein (159 aa).

It belongs to the SmpB family.

It is found in the cytoplasm. Its function is as follows. Required for rescue of stalled ribosomes mediated by trans-translation. Binds to transfer-messenger RNA (tmRNA), required for stable association of tmRNA with ribosomes. tmRNA and SmpB together mimic tRNA shape, replacing the anticodon stem-loop with SmpB. tmRNA is encoded by the ssrA gene; the 2 termini fold to resemble tRNA(Ala) and it encodes a 'tag peptide', a short internal open reading frame. During trans-translation Ala-aminoacylated tmRNA acts like a tRNA, entering the A-site of stalled ribosomes, displacing the stalled mRNA. The ribosome then switches to translate the ORF on the tmRNA; the nascent peptide is terminated with the 'tag peptide' encoded by the tmRNA and targeted for degradation. The ribosome is freed to recommence translation, which seems to be the essential function of trans-translation. This Bifidobacterium adolescentis (strain ATCC 15703 / DSM 20083 / NCTC 11814 / E194a) protein is SsrA-binding protein.